The following is a 352-amino-acid chain: Photosystem II D2 protein (352 aa).

The helical transmembrane segment at 40 to 60 (TAYLALGGWLTGTTFVTSWYT) threads the bilayer. A chlorophyll a-binding site is contributed by His117. Residues 124–140 (GFMLRQFEIARLVGIRP) traverse the membrane as a helical segment. 2 residues coordinate pheophytin a: Gln129 and Asn142. A helical membrane pass occupies residues 152-165 (VFVSVFLIYPLGQS). Residue His197 participates in chlorophyll a binding. Residues 207–227 (GALLCAIHGATVENTLFEDGE) traverse the membrane as a helical segment. A plastoquinone contacts are provided by His214 and Phe261. His214 is a Fe cation binding site. His268 provides a ligand contact to Fe cation. The chain crosses the membrane as a helical span at residues 278-294 (GLWTSSIGIIGLALNLR).

The protein belongs to the reaction center PufL/M/PsbA/D family. In terms of assembly, PSII is composed of 1 copy each of membrane proteins PsbA, PsbB, PsbC, PsbD, PsbE, PsbF, PsbH, PsbI, PsbJ, PsbK, PsbL, PsbM, PsbT, PsbX, PsbY, PsbZ, Psb30/Ycf12, at least 3 peripheral proteins of the oxygen-evolving complex and a large number of cofactors. It forms dimeric complexes. The cofactor is The D1/D2 heterodimer binds P680, chlorophylls that are the primary electron donor of PSII, and subsequent electron acceptors. It shares a non-heme iron and each subunit binds pheophytin, quinone, additional chlorophylls, carotenoids and lipids. There is also a Cl(-1) ion associated with D1 and D2, which is required for oxygen evolution. The PSII complex binds additional chlorophylls, carotenoids and specific lipids..

The protein resides in the plastid. Its subcellular location is the organellar chromatophore thylakoid membrane. It carries out the reaction 2 a plastoquinone + 4 hnu + 2 H2O = 2 a plastoquinol + O2. Functionally, photosystem II (PSII) is a light-driven water:plastoquinone oxidoreductase that uses light energy to abstract electrons from H(2)O, generating O(2) and a proton gradient subsequently used for ATP formation. It consists of a core antenna complex that captures photons, and an electron transfer chain that converts photonic excitation into a charge separation. The D1/D2 (PsbA/PsbD) reaction center heterodimer binds P680, the primary electron donor of PSII as well as several subsequent electron acceptors. D2 is needed for assembly of a stable PSII complex. The sequence is that of Photosystem II D2 protein from Paulinella chromatophora.